The following is a 107-amino-acid chain: Putative protein RFPL3S (107 aa).

As to expression, strongly expressed in the testis and weakly in brain, placenta and pancreas.

This chain is Putative protein RFPL3S (RFPL3S), found in Homo sapiens (Human).